Reading from the N-terminus, the 2157-residue chain is Conidial yellow pigment biosynthesis polyketide synthase (2157 aa).

Positions 8–244 (YLFGDQTGDF…VMVPIHGPFH (237 aa)) are N-terminal acylcarrier protein transacylase domain (SAT). The Ketosynthase family 3 (KS3) domain occupies 376-807 (LSKIAIIGMS…GGNTALLLED (432 aa)). Catalysis depends on for beta-ketoacyl synthase activity residues cysteine 548, histidine 683, and histidine 725. Residues 912 to 1232 (FLFTGQGAQY…LSSLYLAGVD (321 aa)) are malonyl-CoA:ACP transacylase (MAT) domain. Serine 1001 serves as the catalytic For acyl/malonyl transferase activity. Residues 1290–1603 (TTSAQRVVES…RKILDIALPP (314 aa)) are product template (PT) domain. Positions 1294-1425 (QRVVESRDDG…CEVKLFDCMA (132 aa)) are N-terminal hotdog fold. Residues 1294–1598 (QRVVESRDDG…FQALSRKILD (305 aa)) enclose the PKS/mFAS DH domain. The active-site Proton acceptor; for dehydratase activity is the histidine 1326. Positions 1453 to 1598 (AHRLRRGMVY…FQALSRKILD (146 aa)) are C-terminal hotdog fold. Aspartate 1511 (proton donor; for dehydratase activity) is an active-site residue. A disordered region spans residues 1607–1638 (SKAQTSPIQSSAPQKPIETAKPTSRPAPPVTM). Over residues 1608–1619 (KAQTSPIQSSAP) the composition is skewed to polar residues. The region spanning 1645-1722 (SAGPSVVVRA…DFKRFVTQLS (78 aa)) is the Carrier 1 domain. An O-(pantetheine 4'-phosphoryl)serine modification is found at serine 1682. The tract at residues 1725 to 1760 (VASDSSSTDRESEYSFNGDSCSGLSSPASPGTVSPP) is disordered. The span at 1741-1759 (NGDSCSGLSSPASPGTVSP) shows a compositional bias: polar residues. The Carrier 2 domain occupies 1767–1844 (IHENGTMKEI…QIETALDLKP (78 aa)). An O-(pantetheine 4'-phosphoryl)serine modification is found at serine 1804. The disordered stretch occupies residues 1847–1888 (VPTAVPQSQPITLPQSQSTKQLSTRPTSSSDNHPPATSILLQ). Residues 1851–1878 (VPQSQPITLPQSQSTKQLSTRPTSSSDN) show a composition bias toward polar residues. The claisen cyclase domain stretch occupies residues 1877–2149 (DNHPPATSIL…ELATFMKNAL (273 aa)). The active-site For thioesterase activity is the serine 1967.

Pantetheine 4'-phosphate serves as cofactor.

It carries out the reaction 6 malonyl-CoA + acetyl-CoA + 6 H(+) = naphtopyrone YWA1 + 6 CO2 + 7 CoA + H2O. It participates in polyketide biosynthesis; heptaketide naphthopyrone YWA1 biosynthesis. In terms of biological role, non-reducing polyketide synthase that condenses acetate units to form a heptaketide naphthopyrene YWA1, a yellow pigment found in mature asexual spores (conidia), via a polyketomethylene intermediate step. In Emericella nidulans (strain FGSC A4 / ATCC 38163 / CBS 112.46 / NRRL 194 / M139) (Aspergillus nidulans), this protein is Conidial yellow pigment biosynthesis polyketide synthase.